We begin with the raw amino-acid sequence, 154 residues long: RxLR effector protein PexRD24 (154 aa).

An N-terminal signal peptide occupies residues 1 to 22 (MHSSLLWLGAVVALLAVNNVTA). Positions 53–67 (RSLRAVETSEDEEER) match the RxLR-dEER motif. Position 138 (Lys-138) is a short sequence motif, PP1c-binding motif.

The protein belongs to the RxLR effector family. Interacts with the potato PP1c family proteins PP1c-1, PP1c-2 and PP1c-3.

It is found in the secreted. The protein localises to the host nucleus. Its subcellular location is the host nucleoplasm. It localises to the host nucleolus. Effector that interacts with isoforms of host protein phosphatase type 1c (PP1c), mimicking a regulatory subunit and causing their re-localization within the host nucleus. The holoenzymes formed with PP1c isoforms act to promote late blight by attenuating jasmonic acid (JA)- and salicylic acid (SA)-mediated transcriptional responses of the host plant. The chain is RxLR effector protein PexRD24 from Phytophthora infestans (strain T30-4) (Potato late blight agent).